The chain runs to 146 residues: Large ribosomal subunit protein uL16 (146 aa).

It belongs to the universal ribosomal protein uL16 family. As to quaternary structure, part of the 50S ribosomal subunit.

Its function is as follows. Binds 23S rRNA and is also seen to make contacts with the A and possibly P site tRNAs. This chain is Large ribosomal subunit protein uL16, found in Lactobacillus helveticus (strain DPC 4571).